The chain runs to 241 residues: Large ribosomal subunit protein uL2 (241 aa).

Positions 200–241 are disordered; that stretch reads AVDHPHGGGNRQHPGRPTTISRHAPAGRKVGSIAAKRTGKRR.

This sequence belongs to the universal ribosomal protein uL2 family. In terms of assembly, part of the 50S ribosomal subunit. Forms a bridge to the 30S subunit in the 70S ribosome.

Its function is as follows. One of the primary rRNA binding proteins. Required for association of the 30S and 50S subunits to form the 70S ribosome, for tRNA binding and peptide bond formation. It has been suggested to have peptidyltransferase activity; this is somewhat controversial. Makes several contacts with the 16S rRNA in the 70S ribosome. The protein is Large ribosomal subunit protein uL2 of Methanosphaera stadtmanae (strain ATCC 43021 / DSM 3091 / JCM 11832 / MCB-3).